Here is a 50-residue protein sequence, read N- to C-terminus: Sperm protamine P1 (50 aa).

The protein belongs to the protamine P1 family. As to quaternary structure, cross-linked by interchain disulfide bonds around the DNA-helix. In terms of tissue distribution, testis.

Its subcellular location is the nucleus. The protein resides in the chromosome. In terms of biological role, protamines substitute for histones in the chromatin of sperm during the haploid phase of spermatogenesis. They compact sperm DNA into a highly condensed, stable and inactive complex. The chain is Sperm protamine P1 (PRM1) from Pan paniscus (Pygmy chimpanzee).